The sequence spans 594 residues: ATP-dependent lipid A-core flippase (594 aa).

The next 6 helical transmembrane spans lie at 35-55 (FVLA…IPKV), 64-84 (FGGS…GVAL), 135-155 (AVIF…ITLV), 161-181 (VVAL…VVAV), 262-282 (VTAF…MIQA), and 289-309 (IGGF…LKHL). An ABC transmembrane type-1 domain is found at 36 to 318 (VLAIIAMGLV…LADLNQPLQR (283 aa)). An ABC transporter domain is found at 350 to 588 (LVFDNVGFRY…NGLYAGLHRI (239 aa)). Position 384–391 (384–391 (GPSGSGKT)) interacts with ATP.

The protein belongs to the ABC transporter superfamily. Lipid exporter (TC 3.A.1.106) family. In terms of assembly, homodimer.

It localises to the cell inner membrane. It carries out the reaction ATP + H2O + lipid A-core oligosaccharideSide 1 = ADP + phosphate + lipid A-core oligosaccharideSide 2.. Involved in lipopolysaccharide (LPS) biosynthesis. Translocates lipid A-core from the inner to the outer leaflet of the inner membrane. Transmembrane domains (TMD) form a pore in the inner membrane and the ATP-binding domain (NBD) is responsible for energy generation. The chain is ATP-dependent lipid A-core flippase from Cupriavidus metallidurans (strain ATCC 43123 / DSM 2839 / NBRC 102507 / CH34) (Ralstonia metallidurans).